Reading from the N-terminus, the 238-residue chain is uncharacterized protein (238 aa).

The protein to M.thermoautotrophicum MTH564.

This is an uncharacterized protein from Methanocaldococcus jannaschii (strain ATCC 43067 / DSM 2661 / JAL-1 / JCM 10045 / NBRC 100440) (Methanococcus jannaschii).